We begin with the raw amino-acid sequence, 184 residues long: Ribosome maturation factor RimM (184 aa).

The 80-residue stretch at 101-180 (EGEFFYCDLV…KITTHNAKTL (80 aa)) folds into the PRC barrel domain.

This sequence belongs to the RimM family. As to quaternary structure, binds ribosomal protein uS19.

The protein localises to the cytoplasm. Functionally, an accessory protein needed during the final step in the assembly of 30S ribosomal subunit, possibly for assembly of the head region. Essential for efficient processing of 16S rRNA. May be needed both before and after RbfA during the maturation of 16S rRNA. It has affinity for free ribosomal 30S subunits but not for 70S ribosomes. The chain is Ribosome maturation factor RimM from Helicobacter pylori (strain ATCC 700392 / 26695) (Campylobacter pylori).